We begin with the raw amino-acid sequence, 313 residues long: ADP-L-glycero-D-manno-heptose-6-epimerase (313 aa).

Residues 10-11 (MI), 31-32 (DN), Lys-38, Lys-53, 75-79 (EGACS), and Asn-92 contribute to the NADP(+) site. Tyr-139 (proton acceptor) is an active-site residue. Lys-143 serves as a coordination point for NADP(+). Residue Asn-174 coordinates substrate. Positions 175 and 183 each coordinate NADP(+). Catalysis depends on Lys-183, which acts as the Proton acceptor. Residues Ser-185, His-192, 206-209 (FEGS), Arg-214, and Tyr-277 contribute to the substrate site.

It belongs to the NAD(P)-dependent epimerase/dehydratase family. HldD subfamily. As to quaternary structure, homopentamer. It depends on NADP(+) as a cofactor.

The catalysed reaction is ADP-D-glycero-beta-D-manno-heptose = ADP-L-glycero-beta-D-manno-heptose. Its pathway is nucleotide-sugar biosynthesis; ADP-L-glycero-beta-D-manno-heptose biosynthesis; ADP-L-glycero-beta-D-manno-heptose from D-glycero-beta-D-manno-heptose 7-phosphate: step 4/4. Functionally, catalyzes the interconversion between ADP-D-glycero-beta-D-manno-heptose and ADP-L-glycero-beta-D-manno-heptose via an epimerization at carbon 6 of the heptose. The chain is ADP-L-glycero-D-manno-heptose-6-epimerase from Aliivibrio fischeri (strain ATCC 700601 / ES114) (Vibrio fischeri).